The sequence spans 607 residues: Chaperone protein DnaK (607 aa).

Position 174 is a phosphothreonine; by autocatalysis (Thr-174). A compositionally biased stretch (polar residues) spans 577–594; it reads QSAGSTAGNPGQGQSTEN. Residues 577–607 are disordered; sequence QSAGSTAGNPGQGQSTENPGGKTIDGDYKVN.

It belongs to the heat shock protein 70 family.

Functionally, acts as a chaperone. The sequence is that of Chaperone protein DnaK from Dictyoglomus turgidum (strain DSM 6724 / Z-1310).